A 546-amino-acid chain; its full sequence is Alpha-isocomene synthase (546 aa).

Residues D299, D303, D443, and E451 each contribute to the Mg(2+) site. The DDXXD motif signature appears at 299–303 (DDTYD).

It belongs to the terpene synthase family. Tpsa subfamily. It depends on Mg(2+) as a cofactor. The cofactor is Mn(2+). Highly expressed in roots, lower levels in stems and leaves and detected in disk florets, but not in ray florets.

It carries out the reaction (2E,6E)-farnesyl diphosphate = (-)-alpha-isocomene + diphosphate. Its pathway is secondary metabolite biosynthesis; terpenoid biosynthesis. Its function is as follows. Sesquiterpene synthase involved in the biosynthesis of alpha-isocomene as the major product and detectable amounts of beta-caryophyllene, beta-isocomene, silphinene and modeph-2-ene. Produces exclusively the (-)-(E)-beta caryophyllene enantiomer. The polypeptide is Alpha-isocomene synthase (Matricaria chamomilla var. recutita (German chamomile)).